The following is a 270-amino-acid chain: Orotidine 5'-phosphate decarboxylase (270 aa).

Residues Asp41, 63–65 (KTH), 95–104 (DRKFADIGNT), Tyr221, and Arg239 contribute to the substrate site. The active-site Proton donor is the Lys97.

Belongs to the OMP decarboxylase family.

The catalysed reaction is orotidine 5'-phosphate + H(+) = UMP + CO2. It functions in the pathway pyrimidine metabolism; UMP biosynthesis via de novo pathway; UMP from orotate: step 2/2. In Candida boidinii (Yeast), this protein is Orotidine 5'-phosphate decarboxylase (URA3).